The chain runs to 263 residues: Endonuclease 8 (263 aa).

The active-site Schiff-base intermediate with DNA is Pro2. Glu3 functions as the Proton donor in the catalytic mechanism. Lys53 functions as the Proton donor; for beta-elimination activity in the catalytic mechanism. 3 residues coordinate DNA: Gln70, Arg125, and Asn169. An FPG-type zinc finger spans residues 229-263 (KVFHRDGERCERCGGIIEKTTLSSRPFYWCPGCQH). The Proton donor; for delta-elimination activity role is filled by Arg253.

The protein belongs to the FPG family. Zn(2+) serves as cofactor.

It catalyses the reaction 2'-deoxyribonucleotide-(2'-deoxyribose 5'-phosphate)-2'-deoxyribonucleotide-DNA = a 3'-end 2'-deoxyribonucleotide-(2,3-dehydro-2,3-deoxyribose 5'-phosphate)-DNA + a 5'-end 5'-phospho-2'-deoxyribonucleoside-DNA + H(+). Functionally, involved in base excision repair of DNA damaged by oxidation or by mutagenic agents. Acts as a DNA glycosylase that recognizes and removes damaged bases. Has a preference for oxidized pyrimidines, such as thymine glycol, 5,6-dihydrouracil and 5,6-dihydrothymine. Has AP (apurinic/apyrimidinic) lyase activity and introduces nicks in the DNA strand. Cleaves the DNA backbone by beta-delta elimination to generate a single-strand break at the site of the removed base with both 3'- and 5'-phosphates. The protein is Endonuclease 8 of Klebsiella pneumoniae subsp. pneumoniae (strain ATCC 700721 / MGH 78578).